Consider the following 421-residue polypeptide: Phosphoglycerate kinase (421 aa).

(2R)-3-phosphoglycerate-binding residues include V23, D24, F25, N26, Q41, R42, S65, H66, G68, R69, L124, R125, H172, and R173. Residue G216 participates in ADP binding. G216 contributes to the CDP binding site. An AMP-binding site is contributed by K218. A CDP-binding site is contributed by D221. D221 serves as a coordination point for Mg(2+). K222 serves as a coordination point for AMP. Position 222 (K222) interacts with ATP. G240 is a binding site for ADP. Residue G240 coordinates CDP. Residues G241 and G315 each coordinate AMP. Residues G241 and G315 each coordinate ATP. Positions 340 and 345 each coordinate CDP. F345 contributes to the ADP binding site. E346 is a binding site for AMP. Residues E346, D377, and T378 each contribute to the ATP site. D377 is a binding site for Mg(2+).

This sequence belongs to the phosphoglycerate kinase family. Monomer. It depends on Mg(2+) as a cofactor.

It is found in the cytoplasm. The protein localises to the mitochondrion. The enzyme catalyses (2R)-3-phosphoglycerate + ATP = (2R)-3-phospho-glyceroyl phosphate + ADP. It functions in the pathway carbohydrate degradation; glycolysis; pyruvate from D-glyceraldehyde 3-phosphate: step 2/5. Functionally, catalyzes one of the two ATP producing reactions in the glycolytic pathway via the reversible conversion of 1,3-diphosphoglycerate to 3-phosphoglycerate. Both L- and D- forms of purine and pyrimidine nucleotides can be used as substrates, but the activity is much lower on pyrimidines. Negatively regulates the biosynthesis of acetyl-CoA from pyruvate in the mitochondrion. This Emericella nidulans (strain FGSC A4 / ATCC 38163 / CBS 112.46 / NRRL 194 / M139) (Aspergillus nidulans) protein is Phosphoglycerate kinase (pgkA).